The following is a 653-amino-acid chain: Dystrotelin (653 aa).

The ZZ-type zinc-finger motif lies at 223-279 (THPVRCSVCRTFPIIGLRYHCLKCLDFDICELCFLSGLHKNSHEKSHTVMEECVQMS). Cys-228, Cys-231, Cys-243, Cys-246, Cys-252, Cys-255, His-265, and His-269 together coordinate Zn(2+). Residues 384 to 411 (RDSLNTLLRERRLLRKQLHRYKQKLQGT) are a coiled coil.

Strongly expressed in the nervous and muscular tissues.

The protein resides in the cell membrane. This Mus musculus (Mouse) protein is Dystrotelin (Dytn).